The chain runs to 1242 residues: Membrane-associated phosphatidylinositol transfer protein 1 (1242 aa).

Phosphothreonine occurs at positions 59, 282, and 287. The disordered stretch occupies residues 259–330; that stretch reads CNTGSEGPEA…HGGGVSPQSL (72 aa). Residues 272–282 show a composition bias toward polar residues; sequence GKPSTETQPGT. Over residues 299-319 the composition is skewed to low complexity; the sequence is ASPDASFGKQWSSSSRSSYSS. A phosphoserine mark is found at serine 300, serine 304, serine 319, serine 326, serine 329, serine 342, serine 345, serine 346, and serine 373. At serine 382 the chain carries Phosphoserine; by CDK1. The segment covering 581-593 has biased composition (low complexity); that stretch reads AGTGSRGSSRRGS. The tract at residues 581-678 is disordered; the sequence is AGTGSRGSSR…PASSEAPDGP (98 aa). Serine 593, serine 600, and serine 621 each carry phosphoserine. Polar residues predominate over residues 643-656; the sequence is GSQNSLQVAPTVTS. Residues 684-878 enclose the DDHD domain; sequence LDFKVSGFFL…VAFILRQVIE (195 aa). At serine 894 the chain carries Phosphoserine. The disordered stretch occupies residues 1207–1242; it reads RSRGPSQVDLEGPGTPPTTLARGKTRSISLKLDSEE. Omega-N-methylarginine is present on arginine 1209. Serine 1235 carries the post-translational modification Phosphoserine.

The protein belongs to the PtdIns transfer protein family. PI transfer class IIA subfamily. In terms of assembly, interacts with PIK4CA and VAPB. Interacts with PTK2B via its C-terminus. Interacts with RHOA. Has higher affinity for the inactive, GDP-bound form of RHOA. The CDK1-phosphorylated form interacts with PLK1. Phosphorylated on multiple sites by CDK1 at the onset of mitosis. Phosphorylation facilitates dissociation from the Golgi complex and is required for interaction with PLK1. Post-translationally, phosphorylated on threonine residues upon treatment with oleic acid. In terms of processing, phosphorylated on tyrosine residues by PTK2B.

Its subcellular location is the cytoplasm. It is found in the golgi apparatus. The protein localises to the golgi stack membrane. It localises to the endoplasmic reticulum membrane. The protein resides in the lipid droplet. Its subcellular location is the cleavage furrow. It is found in the midbody. It catalyses the reaction a 1,2-diacyl-sn-glycero-3-phospho-(1D-myo-inositol)(in) = a 1,2-diacyl-sn-glycero-3-phospho-(1D-myo-inositol)(out). Functionally, catalyzes the transfer of phosphatidylinositol (PI) between membranes. Binds PI, phosphatidylcholine (PC) and phosphatidic acid (PA) with the binding affinity order of PI &gt; PA &gt; PC. Regulates RHOA activity, and plays a role in cytoskeleton remodeling. Necessary for normal completion of cytokinesis. Plays a role in maintaining normal diacylglycerol levels in the Golgi apparatus. Necessary for maintaining the normal structure of the endoplasmic reticulum and the Golgi apparatus. Required for protein export from the endoplasmic reticulum and the Golgi. Binds calcium ions. The chain is Membrane-associated phosphatidylinositol transfer protein 1 (Pitpnm1) from Rattus norvegicus (Rat).